The sequence spans 67 residues: Large ribosomal subunit protein bL32 (67 aa).

Residues 1 to 19 show a composition bias toward basic residues; that stretch reads MAVPKRKQSRANTHARRSQ. Positions 1-20 are disordered; that stretch reads MAVPKRKQSRANTHARRSQW.

It belongs to the bacterial ribosomal protein bL32 family.

This is Large ribosomal subunit protein bL32 from Leifsonia xyli subsp. xyli (strain CTCB07).